The primary structure comprises 517 residues: BTB/POZ domain-containing protein At3g49900 (517 aa).

Residues 28-37 show a composition bias toward low complexity; the sequence is SSSSSSLSLS. Residues 28–49 are disordered; it reads SSSSSSLSLSPKQPINLSSSPS. Residues 38-49 are compositionally biased toward polar residues; it reads PKQPINLSSSPS. Residues 67 to 130 form the BTB domain; the sequence is PDVFVNVGGT…CYGAHIELTP (64 aa). The 84-residue stretch at 224–307 folds into the NPH3 domain; the sequence is LPAGDFNVVA…VRAMLQEQLN (84 aa). Residues 409-456 are disordered; sequence ARSASFHCVHQPSNVNKTQRGDRGSVSNLSTTYRRRRASPPQAQPQKS.

It belongs to the NPH3 family.

Its pathway is protein modification; protein ubiquitination. In terms of biological role, may act as a substrate-specific adapter of an E3 ubiquitin-protein ligase complex (CUL3-RBX1-BTB) which mediates the ubiquitination and subsequent proteasomal degradation of target proteins. This Arabidopsis thaliana (Mouse-ear cress) protein is BTB/POZ domain-containing protein At3g49900.